We begin with the raw amino-acid sequence, 170 residues long: Acetyl-CoA decarbonylase/synthase complex subunit epsilon 2 (170 aa).

It belongs to the CdhB family. Heterotetramer of two alpha and two epsilon subunits. The ACDS complex is made up of alpha, epsilon, beta, gamma and delta subunits with a probable stoichiometry of (alpha(2)epsilon(2))(4)-beta(8)-(gamma(1)delta(1))(8).

The protein operates within one-carbon metabolism; methanogenesis from acetate. Part of a complex that catalyzes the reversible cleavage of acetyl-CoA, allowing growth on acetate as sole source of carbon and energy. The alpha-epsilon subcomponent functions as a carbon monoxide dehydrogenase. The precise role of the epsilon subunit is unclear; it may have a stabilizing role within the alpha(2)epsilon(2) component and/or be involved in electron transfer to FAD during a potential FAD-mediated CO oxidation. The sequence is that of Acetyl-CoA decarbonylase/synthase complex subunit epsilon 2 (cdhB2) from Methanosarcina acetivorans (strain ATCC 35395 / DSM 2834 / JCM 12185 / C2A).